We begin with the raw amino-acid sequence, 224 residues long: UPF0758 protein CV_3079 (224 aa).

Residues 102–224 form the MPN domain; it reads ALSSPQQVRD…AESFAERGWL (123 aa). The Zn(2+) site is built by His173, His175, and Asp186. Positions 173-186 match the JAMM motif motif; the sequence is HNHPSGVSEPSSAD.

Belongs to the UPF0758 family.

In Chromobacterium violaceum (strain ATCC 12472 / DSM 30191 / JCM 1249 / CCUG 213 / NBRC 12614 / NCIMB 9131 / NCTC 9757 / MK), this protein is UPF0758 protein CV_3079.